The primary structure comprises 329 residues: Trem-like transcript 2 protein (329 aa).

The N-terminal stretch at 1–24 is a signal peptide; sequence MEPWPLTFLLLLLLLLWLQGCVSG. The Ig-like V-type domain maps to 25 to 126; sequence HSNENLYRKV…HFYPLVGFQL (102 aa). Topologically, residues 25–270 are extracellular; it reads HSNENLYRKV…NRSQETYIPA (246 aa). Cystine bridges form between Cys-46–Cys-110 and Cys-61–Cys-68. The tract at residues 202 to 259 is disordered; the sequence is FIDTSGTVTEPERNTESQPATLSPSNARSFSADPVTTSTMSRHQSSSLSTTGTCHPLT. The span at 217-259 shows a compositional bias: polar residues; it reads ESQPATLSPSNARSFSADPVTTSTMSRHQSSSLSTTGTCHPLT. The N-linked (GlcNAc...) asparagine glycan is linked to Asn-261. A helical membrane pass occupies residues 271-291; that stretch reads MVVVLTFLPAPVVLVVAYGFW. The Cytoplasmic segment spans residues 292 to 329; the sequence is KKRHMGRYNLGSNYAKPWIHLPEGPETPWKPAWSKITQ.

As to quaternary structure, interacts with CD276 and this interaction enhances T-cell activation. In terms of tissue distribution, detected in B-lymphocytes and macrophages. Detected in spleen, lymph nodes, blood, bone marrow and cells from the peritoneal cavity (at protein level).

Its subcellular location is the cell membrane. Functionally, cell surface receptor that may play a role in the innate and adaptive immune response. Acts as a counter-receptor for CD276 and interaction with CD276 on T-cells enhances T-cell activation. The protein is Trem-like transcript 2 protein (Treml2) of Mus musculus (Mouse).